A 57-amino-acid polypeptide reads, in one-letter code: Small ribosomal subunit protein eS27 (57 aa).

Positions 10, 13, 29, and 32 each coordinate Zn(2+). A C4-type zinc finger spans residues 10 to 32 (CPDCENEQTVFGKASTEVACAVC).

It belongs to the eukaryotic ribosomal protein eS27 family. Part of the 30S ribosomal subunit. It depends on Zn(2+) as a cofactor.

This is Small ribosomal subunit protein eS27 from Halobacterium salinarum (strain ATCC 29341 / DSM 671 / R1).